The chain runs to 312 residues: Pyridoxal 5'-phosphate synthase subunit PDX1 (312 aa).

D-ribose 5-phosphate is bound at residue D43. The active-site Schiff-base intermediate with D-ribose 5-phosphate is the K100. G172 contacts D-ribose 5-phosphate. R184 contributes to the D-glyceraldehyde 3-phosphate binding site. D-ribose 5-phosphate contacts are provided by residues G233 and G254–S255.

Belongs to the PdxS/SNZ family.

The enzyme catalyses aldehydo-D-ribose 5-phosphate + D-glyceraldehyde 3-phosphate + L-glutamine = pyridoxal 5'-phosphate + L-glutamate + phosphate + 3 H2O + H(+). The protein operates within cofactor biosynthesis; pyridoxal 5'-phosphate biosynthesis. In terms of biological role, catalyzes the formation of pyridoxal 5'-phosphate from ribose 5-phosphate (RBP), glyceraldehyde 3-phosphate (G3P) and ammonia. The ammonia is provided by PDX2. Can also use ribulose 5-phosphate and dihydroxyacetone phosphate as substrates, resulting from enzyme-catalyzed isomerization of RBP and G3P, respectively. Also plays an indirect role in resistance to singlet oxygen-generating photosensitizers. This Phaseolus vulgaris (Kidney bean) protein is Pyridoxal 5'-phosphate synthase subunit PDX1 (PDX1).